A 530-amino-acid chain; its full sequence is Transcriptional regulator VasH (530 aa).

A Sigma-54 factor interaction domain is found at Leu-193–Ala-422. ATP-binding positions include Gly-221–Glu-228 and Ala-284–Glu-293.

Its function is as follows. Transcriptional regulator of the type VI secretion system. The chain is Transcriptional regulator VasH from Vibrio cholerae serotype O1 (strain ATCC 39315 / El Tor Inaba N16961).